The chain runs to 706 residues: Termination factor NPH-I homolog (706 aa).

The 166-residue stretch at 62-227 (IGQGENTRGL…VPCFNMLSGR (166 aa)) folds into the Helicase ATP-binding domain. Residue 75–82 (HQMGMGKT) participates in ATP binding. The DEAH box signature appears at 168 to 171 (DEAH). A Helicase C-terminal domain is found at 417-599 (QCLQPLKVLE…HLNSAFRDLL (183 aa)).

The protein belongs to the DEAD box helicase family. DEAH subfamily. As to quaternary structure, part of the viral DNA-directed RNA polymerase that consists of 8 polII-like subunits (RPB1, RPB2, RPB3, RPB5, RPB6, RPB7, RPB9, RPB10), a capping enzyme and a termination factor.

It localises to the virion. In terms of biological role, putative DNA-dependent ATPase required for providing the needed energy to achieve the termination of early transcripts. This is Termination factor NPH-I homolog from African swine fever virus (isolate Warthog/Namibia/Wart80/1980) (ASFV).